Reading from the N-terminus, the 333-residue chain is Protein SEEDLING LETHAL 1, chloroplastic (333 aa).

Residues methionine 1–serine 55 constitute a chloroplast transit peptide. Residues proline 38–glutamate 67 are disordered.

Belongs to the mTERF family. In terms of assembly, self-interacts. Associates with the plastid-encoded RNA polymerase (PEP) complex. Interacts directly with PTAC7/PAP12, PTAC12/HMR/PAP5 and PTAC14/PAP7. Expressed in green aerial tissues such as cotyledons, leaves, flowers and siliques, but not in roots.

Its subcellular location is the plastid. It is found in the chloroplast stroma. The protein resides in the chloroplast nucleoid. Transcription termination factor required for chloroplast gene expression and protein synthesis in chloroplasts. Necessary for chloroplast photosynthetic complexes assembly by modulating the accumulation of photosynthetic proteins. Essential for embryogenesis. The polypeptide is Protein SEEDLING LETHAL 1, chloroplastic (Arabidopsis thaliana (Mouse-ear cress)).